Consider the following 720-residue polypeptide: Protein unc-112 (720 aa).

Disordered stretches follow at residues 145-170 (DLRR…ESVG) and 210-236 (MGTL…TMRR). In terms of domain architecture, FERM spans 288–614 (WLDSSRSLME…ALPEHGIHYF (327 aa)). Residues 402–507 (VPELADYLKY…WMAACRLASR (106 aa)) enclose the PH domain.

Belongs to the kindlin family. As to quaternary structure, interacts with pat-4/ILK. Probably forms a complex with pat-4 and pat-6. Component of an integrin containing attachment complex, composed of at least pat-2, pat-3, pat-4, pat-6, unc-52, unc-97 and unc-112. In terms of tissue distribution, mainly expressed in muscle cells in both embryos and adults.

Its subcellular location is the cell membrane. It is found in the cytoplasm. It localises to the myofibril. The protein resides in the sarcomere. The protein localises to the m line. Its function is as follows. Component of an integrin containing attachment complex, which is required for muscle development and maintenance. Probable regulator of cell-extracellular matrix adhesion. Required during initial muscle assembly to form dense bodies and M-lines. This chain is Protein unc-112, found in Caenorhabditis elegans.